The primary structure comprises 361 residues: Histidinol-phosphate aminotransferase (361 aa).

Lysine 223 is subject to N6-(pyridoxal phosphate)lysine.

This sequence belongs to the class-II pyridoxal-phosphate-dependent aminotransferase family. Histidinol-phosphate aminotransferase subfamily. Homodimer. Requires pyridoxal 5'-phosphate as cofactor.

It carries out the reaction L-histidinol phosphate + 2-oxoglutarate = 3-(imidazol-4-yl)-2-oxopropyl phosphate + L-glutamate. It functions in the pathway amino-acid biosynthesis; L-histidine biosynthesis; L-histidine from 5-phospho-alpha-D-ribose 1-diphosphate: step 7/9. This Deinococcus radiodurans (strain ATCC 13939 / DSM 20539 / JCM 16871 / CCUG 27074 / LMG 4051 / NBRC 15346 / NCIMB 9279 / VKM B-1422 / R1) protein is Histidinol-phosphate aminotransferase.